A 632-amino-acid chain; its full sequence is Glycerophosphodiester phosphodiesterase domain-containing protein 4 (632 aa).

Topologically, residues 1-64 (MEETQDSSSS…GSCCCSRKEQ (64 aa)) are cytoplasmic. The chain crosses the membrane as a helical span at residues 65-85 (FFYMCLVIAFILSVLFLFVWV). At 86–114 (ETSNEYNGFDWVVYLGTGCWFFWSILVLS) the chain is on the extracellular side. The helical transmembrane segment at 115–135 (AAGIMVAYTTLLLLLGFLLLW) threads the bilayer. Topologically, residues 136–147 (ERIELNLHTSHK) are cytoplasmic. Residues 148–168 (VFICLVIVLCSFLLAVLSHFW) traverse the membrane as a helical segment. Residues 169–180 (KDKWLIAGLSLQ) are Extracellular-facing. The chain crosses the membrane as a helical span at residues 181 to 201 (IFAPFVHLSLITVMIIISWPL). Residues 202–240 (SICVARLESEVKVRRYRMADYEQEIQERCNVFQRLRALQ) lie on the Cytoplasmic side of the membrane. A helical transmembrane segment spans residues 241–261 (IAAGLSFLIILLCLYLMPLGI). Over 262-542 (YSPCILKKEN…SRPLFFMTPG (281 aa)) the chain is Extracellular. In terms of domain architecture, GP-PDE spans 276 to 533 (PTLFGHRGAP…DNIELLNQLS (258 aa)). Positions 308, 310, and 323 each coordinate a divalent metal cation. Residues Asn-343, Asn-349, Asn-384, and Asn-473 are each glycosylated (N-linked (GlcNAc...) asparagine). The chain crosses the membrane as a helical span at residues 543–563 (FYMFMWLFLDIASAVIIGFVF). The Cytoplasmic portion of the chain corresponds to 564–632 (CYNWIKEIKR…QKTEPKTENL (69 aa)). The interval 596-632 (ENNDASQQKPEVAPTSANLAPENMIELQKTEPKTENL) is disordered. Basic and acidic residues predominate over residues 623–632 (QKTEPKTENL).

Belongs to the glycerophosphoryl diester phosphodiesterase family. In terms of tissue distribution, detected in testis, in particular in spermatocytes.

The protein localises to the cytoplasm. Its subcellular location is the membrane. This Mus musculus (Mouse) protein is Glycerophosphodiester phosphodiesterase domain-containing protein 4 (Gdpd4).